The chain runs to 325 residues: Elongation factor P--(R)-beta-lysine ligase (325 aa).

Position 76-78 (76-78 (SPE)) interacts with substrate. ATP is bound by residues 100–102 (RNE) and N109. Y118 is a substrate binding site. Position 244–245 (244–245 (EL)) interacts with ATP. E251 provides a ligand contact to substrate. G300 serves as a coordination point for ATP.

The protein belongs to the class-II aminoacyl-tRNA synthetase family. EpmA subfamily. As to quaternary structure, homodimer.

The catalysed reaction is D-beta-lysine + L-lysyl-[protein] + ATP = N(6)-((3R)-3,6-diaminohexanoyl)-L-lysyl-[protein] + AMP + diphosphate + H(+). Its function is as follows. With EpmB is involved in the beta-lysylation step of the post-translational modification of translation elongation factor P (EF-P). Catalyzes the ATP-dependent activation of (R)-beta-lysine produced by EpmB, forming a lysyl-adenylate, from which the beta-lysyl moiety is then transferred to the epsilon-amino group of a conserved specific lysine residue in EF-P. This Pectobacterium carotovorum subsp. carotovorum (strain PC1) protein is Elongation factor P--(R)-beta-lysine ligase.